The primary structure comprises 337 residues: Autophagy protein 5 (337 aa).

Lys-128 is covalently cross-linked (Glycyl lysine isopeptide (Lys-Gly) (interchain with G-Cter in ATG12)). The interval Arg-271–Ser-290 is disordered. A compositionally biased stretch (basic and acidic residues) spans Gly-276–Ser-290.

This sequence belongs to the ATG5 family. Conjugated to ATG12. Post-translationally, conjugated to ATG12; which is essential for autophagy. Conjugation with ATG12 involves ATG7 as an E1-like activating enzyme and ATG10 as an E2-like conjugating enzyme. Ubiquitous.

The protein resides in the cytoplasm. In terms of biological role, required for autophagy. Conjugation to ATG12 is essential for plant nutrient recycling. Involved in a negative feedback loop that modulates NPR1-dependent salicylic acid (SA) signaling and limits senescence and immunity-related programmed cell death (PCD) in plants. Involved in complete proteolysis of chloroplast stroma proteins in senescent leaves. Involved in the degradation of damaged peroxisomes. This chain is Autophagy protein 5, found in Arabidopsis thaliana (Mouse-ear cress).